Here is a 565-residue protein sequence, read N- to C-terminus: Protein priB (565 aa).

Positions 20–50 form a DNA-binding region, zn(2)-C6 fungal-type; that stretch reads CTTCRAAKMKCVGAEDGQRQCQRCKRANVQC. 2 disordered regions span residues 82 to 170 and 195 to 224; these read AKSK…SDRA and NPED…APAG. Basic and acidic residues predominate over residues 90–111; it reads DARHSSSYRDSHPSLGEPDDRY. Residues 129–155 show a composition bias toward low complexity; that stretch reads SNLPPLNLPSYPDAASEYTASSTSSRT. The span at 203–215 shows a compositional bias: polar residues; it reads GPSSVRCSETYSP.

The protein localises to the nucleus. The chain is Protein priB (priB) from Lentinula edodes (Shiitake mushroom).